Consider the following 357-residue polypeptide: 4-hydroxymandelate synthase (357 aa).

2 consecutive VOC domains span residues 5 to 129 (EIDY…LIQR) and 158 to 309 (GIDH…IFTA). H161 contacts Fe cation. Residues H161, S201, T214, H241, and Q305 each contribute to the substrate site. Residue H241 participates in Fe cation binding. E320 provides a ligand contact to Fe cation.

It belongs to the 4HPPD family. In terms of assembly, monomer. Requires Fe cation as cofactor.

The catalysed reaction is 3-(4-hydroxyphenyl)pyruvate + O2 = (S)-4-hydroxymandelate + CO2. Its pathway is antibiotic biosynthesis; vancomycin biosynthesis. In terms of biological role, required to synthesize hydroxyphenylglycine, a recurring skeletal component of nonproteinogenic macrocyclic peptide antibiotics such as vancomycin. Catalyzes the conversion of p-hydroxyphenylpyruvate to p-hydroxymandelate. The decarboxylation and hydroxylation activities of HmaS show novel and distinct regioselectivity, compared to all other known p-hydroxyphenylpyruvate dioxygenases, by hydroxylating the benzylic position of the substrate instead of the phenyl ring. The sequence is that of 4-hydroxymandelate synthase from Amycolatopsis orientalis (Nocardia orientalis).